The chain runs to 455 residues: Gamma-aminobutyric acid receptor subunit alpha-1 (455 aa).

Residues 1–27 form the signal peptide; it reads MKKSRGLSDYLWAWTLILSTLSGRSYG. Residues 28-252 lie on the Extracellular side of the membrane; the sequence is QPSQDELKDN…FHLKRKIGYF (225 aa). The N-linked (GlcNAc...) asparagine glycan is linked to N37. R93 is a binding site for 4-aminobutanoate. N137 carries N-linked (GlcNAc...) asparagine glycosylation. Residue T156 participates in 4-aminobutanoate binding. C165 and C179 are disulfide-bonded. Residues 253-273 form a helical membrane-spanning segment; the sequence is VIQTYLPCIMTVILSQVSFWL. At 274–278 the chain is on the cytoplasmic side; that stretch reads NRESV. A helical transmembrane segment spans residues 279–300; it reads PARTVFGVTTVLTMTTLSISAR. Residues 301-310 are Extracellular-facing; the sequence is NSLPKVAYAT. The chain crosses the membrane as a helical span at residues 311 to 332; the sequence is AMDWFIAVCYAFVFSALIEFAT. Residues 333-420 lie on the Cytoplasmic side of the membrane; it reads VNYFTKRGYA…TFNSVSKIDR (88 aa). A helical membrane pass occupies residues 421-440; it reads LSRIAFPLLFGIFNLVYWAT. At 441 to 455 the chain is on the extracellular side; that stretch reads YLNREPQLKAPTPHQ.

The protein belongs to the ligand-gated ion channel (TC 1.A.9) family. Gamma-aminobutyric acid receptor (TC 1.A.9.5) subfamily. GABRA1 sub-subfamily. Heteropentamer, formed by a combination of alpha (GABRA1-6), beta (GABRB1-3), gamma (GABRG1-3), delta (GABRD), epsilon (GABRE), rho (GABRR1-3), pi (GABRP) and theta (GABRQ) subunits, each subunit exhibiting distinct physiological and pharmacological properties. Interacts with UBQLN1. Interacts with TRAK1. Interacts with KIF21B. Identified in a complex of 720 kDa composed of LHFPL4, NLGN2, GABRA1, GABRB2, GABRG2 and GABRB3. Interacts with LHFPL4. Interacts with NLGN2. Interacts with SHISA7; interaction leads to the regulation of GABA(A) receptor trafficking, channel deactivation kinetics and pharmacology. In terms of processing, glycosylated. In terms of tissue distribution, expressed in the cerebellum.

The protein localises to the postsynaptic cell membrane. It is found in the cell membrane. Its subcellular location is the cytoplasmic vesicle membrane. The catalysed reaction is chloride(in) = chloride(out). Its activity is regulated as follows. Allosterically activated by benzodiazepines, the neuroanesthetic alphaxalone and pentobarbital. Inhibited by the antagonist bicuculline. Potentiated by histamine. Alpha subunit of the heteropentameric ligand-gated chloride channel gated by Gamma-aminobutyric acid (GABA), a major inhibitory neurotransmitter in the brain. GABA-gated chloride channels, also named GABA(A) receptors (GABAAR), consist of five subunits arranged around a central pore and contain GABA active binding site(s) located at the alpha and beta subunit interface(s). When activated by GABA, GABAARs selectively allow the flow of chloride anions across the cell membrane down their electrochemical gradient. Alpha-1/GABRA1-containing GABAARs are largely synaptic. Chloride influx into the postsynaptic neuron following GABAAR opening decreases the neuron ability to generate a new action potential, thereby reducing nerve transmission. GABAARs containing alpha-1 and beta-2 or -3 subunits exhibit synaptogenic activity; the gamma-2 subunit being necessary but not sufficient to induce rapid synaptic contacts formation. GABAARs function also as histamine receptor where histamine binds at the interface of two neighboring beta subunits and potentiates GABA response. GABAARs containing alpha, beta and epsilon subunits also permit spontaneous chloride channel activity while preserving the structural information required for GABA-gated openings. Alpha-1-mediated plasticity in the orbitofrontal cortex regulates context-dependent action selection. Together with rho subunits, may also control neuronal and glial GABAergic transmission in the cerebellum. The protein is Gamma-aminobutyric acid receptor subunit alpha-1 of Mus musculus (Mouse).